Reading from the N-terminus, the 115-residue chain is MVEYKQCIIIRDDLKLSKGKLAVQVAHAAVSAAEWASRSDLENWKEGGQKKVVLRVEKLQDLFELKEKARREGLSTALITDAGLTEIAPGTVTVLGIGPARADYIDKVTGNLKLV.

The protein belongs to the PTH2 family.

It is found in the cytoplasm. The enzyme catalyses an N-acyl-L-alpha-aminoacyl-tRNA + H2O = an N-acyl-L-amino acid + a tRNA + H(+). Its function is as follows. The natural substrate for this enzyme may be peptidyl-tRNAs which drop off the ribosome during protein synthesis. This Methanococcoides burtonii (strain DSM 6242 / NBRC 107633 / OCM 468 / ACE-M) protein is Peptidyl-tRNA hydrolase.